The primary structure comprises 748 residues: Signal transducer and activator of transcription 4 (748 aa).

The 96-residue stretch at 569–664 folds into the SH2 domain; sequence WIDGYVMGFV…ENPLKYLYPD (96 aa). The residue at position 667 (Lys667) is an N6-acetyllysine. At Tyr693 the chain carries Phosphotyrosine; by JAK. Residue Ser721 is modified to Phosphoserine; by MAP2K6.

The protein belongs to the transcription factor STAT family. As to quaternary structure, forms a homodimer or a heterodimer with a related family member. Interacts with ARL2BP. The SH2 domain interacts, in vitro, with IL12RB2 via a short cytoplasmic domain. Interacts with STAT1. Interacts with JUN; this complex efficiently interacts with the AP-1-related sequence of the IFN-gamma. Post-translationally, acetylation at Lys-667 is required for JAK2-mediated phosphorylation and activation of STAT4. In terms of processing, tyrosine phosphorylated upon IL12 and IFN-alpha activation, but not by IFN-gamma in T-lymphocytes and NK cells. Serine phosphorylation is required for maximal transcriptional activity but not for DNA binding. Phosphorylation by MAP2K6 at Ser-721 is required for full transcriptional activity induced by IL12. However this serine phosphorylation is not required for cell proliferation although critical for IFN-gamma production.

Its subcellular location is the cytoplasm. It is found in the nucleus. Its function is as follows. Transcriptional regulator mainly expressed in hematopoietic cells that plays a critical role in cellular growth, differentiation and immune response. Plays a key role in the differentiation of T-helper 1 cells and the production of interferon-gamma. Also participates in multiple neutrophil functions including chemotaxis and production of the neutrophil extracellular traps. After IL12 binding to its receptor IL12RB2, STAT4 interacts with the intracellular domain of IL12RB2 and becomes tyrosine phosphorylated. Phosphorylated STAT4 then homodimerizes and migrates to the nucleus where it can recognize STAT target sequences present in IL12 responsive genes. Although IL12 appears to be the predominant activating signal, STAT4 can also be phosphorylated and activated in response to IFN-gamma stimulation via JAK1 and TYK2 and in response to different interleukins including IL23, IL2 and IL35. Transcription activation of IFN-gamma gene is mediated by interaction with JUN that forms a complex that efficiently interacts with the AP-1-related sequence of the IFN-gamma promoter. In response to IFN-alpha/beta signaling, acts as a transcriptional repressor and suppresses IL5 and IL13 mRNA expression during response to T-cell receptor (TCR) activation. The protein is Signal transducer and activator of transcription 4 (STAT4) of Homo sapiens (Human).